A 245-amino-acid polypeptide reads, in one-letter code: Alpha carbonic anhydrase 2 (245 aa).

An N-terminal signal peptide occupies residues 1–23 (MDKISIRCFIFLVLTSFVTTVSC). Residues 37–245 (HEFSYEWNQE…THRYFLLFFT (209 aa)) form the Alpha-carbonic anhydrase domain. Cysteines 62 and 222 form a disulfide. Asparagine 95 carries N-linked (GlcNAc...) asparagine glycosylation. The Proton acceptor role is filled by histidine 103. An N-linked (GlcNAc...) asparagine glycan is attached at asparagine 120. Histidine 130, histidine 132, and histidine 149 together coordinate Zn(2+). The N-linked (GlcNAc...) asparagine glycan is linked to asparagine 156. Substrate is bound at residue 218-219 (TT).

Belongs to the alpha-class carbonic anhydrase family. Zn(2+) is required as a cofactor. Post-translationally, N-glycosylated. As to expression, expressed in stems and roots.

It is found in the plastid. Its subcellular location is the chloroplast stroma. The catalysed reaction is hydrogencarbonate + H(+) = CO2 + H2O. In terms of biological role, reversible hydration of carbon dioxide. This Arabidopsis thaliana (Mouse-ear cress) protein is Alpha carbonic anhydrase 2 (ACA2).